Here is a 91-residue protein sequence, read N- to C-terminus: Small ribosomal subunit protein bS18 (91 aa).

The protein belongs to the bacterial ribosomal protein bS18 family. In terms of assembly, part of the 30S ribosomal subunit. Forms a tight heterodimer with protein bS6.

Its function is as follows. Binds as a heterodimer with protein bS6 to the central domain of the 16S rRNA, where it helps stabilize the platform of the 30S subunit. This is Small ribosomal subunit protein bS18 from Gluconacetobacter diazotrophicus (strain ATCC 49037 / DSM 5601 / CCUG 37298 / CIP 103539 / LMG 7603 / PAl5).